Reading from the N-terminus, the 457-residue chain is Bifunctional protein GlmU (457 aa).

Positions 1 to 230 (MSKRYAVVLA…FEESLGVNDR (230 aa)) are pyrophosphorylase. Residues 9–12 (LAAG), Lys23, Gln73, and 78–79 (GT) contribute to the UDP-N-acetyl-alpha-D-glucosamine site. Asp103 is a Mg(2+) binding site. UDP-N-acetyl-alpha-D-glucosamine-binding residues include Gly140, Glu155, Asn170, and Asn228. Residue Asn228 coordinates Mg(2+). Residues 231 to 251 (IALAEASRLMQRRINENHMRN) form a linker region. The tract at residues 252–457 (GVTLVNPENT…GYAKHLNHGK (206 aa)) is N-acetyltransferase. UDP-N-acetyl-alpha-D-glucosamine contacts are provided by Arg333 and Lys351. The active-site Proton acceptor is the His363. Residues Tyr366 and Asn377 each coordinate UDP-N-acetyl-alpha-D-glucosamine. Residues 386-387 (NY), Ala423, and Arg440 contribute to the acetyl-CoA site.

This sequence in the N-terminal section; belongs to the N-acetylglucosamine-1-phosphate uridyltransferase family. In the C-terminal section; belongs to the transferase hexapeptide repeat family. As to quaternary structure, homotrimer. It depends on Mg(2+) as a cofactor.

Its subcellular location is the cytoplasm. It catalyses the reaction alpha-D-glucosamine 1-phosphate + acetyl-CoA = N-acetyl-alpha-D-glucosamine 1-phosphate + CoA + H(+). It carries out the reaction N-acetyl-alpha-D-glucosamine 1-phosphate + UTP + H(+) = UDP-N-acetyl-alpha-D-glucosamine + diphosphate. It participates in nucleotide-sugar biosynthesis; UDP-N-acetyl-alpha-D-glucosamine biosynthesis; N-acetyl-alpha-D-glucosamine 1-phosphate from alpha-D-glucosamine 6-phosphate (route II): step 2/2. It functions in the pathway nucleotide-sugar biosynthesis; UDP-N-acetyl-alpha-D-glucosamine biosynthesis; UDP-N-acetyl-alpha-D-glucosamine from N-acetyl-alpha-D-glucosamine 1-phosphate: step 1/1. The protein operates within bacterial outer membrane biogenesis; LPS lipid A biosynthesis. Its function is as follows. Catalyzes the last two sequential reactions in the de novo biosynthetic pathway for UDP-N-acetylglucosamine (UDP-GlcNAc). The C-terminal domain catalyzes the transfer of acetyl group from acetyl coenzyme A to glucosamine-1-phosphate (GlcN-1-P) to produce N-acetylglucosamine-1-phosphate (GlcNAc-1-P), which is converted into UDP-GlcNAc by the transfer of uridine 5-monophosphate (from uridine 5-triphosphate), a reaction catalyzed by the N-terminal domain. The chain is Bifunctional protein GlmU from Listeria monocytogenes serotype 4b (strain CLIP80459).